The following is a 1560-amino-acid chain: BRD4-interacting chromatin-remodeling complex-associated protein (1560 aa).

Disordered regions lie at residues 53 to 99 (VQEA…GADQ), 624 to 688 (APQA…ATPT), 723 to 949 (IVSA…VTTP), 974 to 1028 (NKAG…TGLP), 1049 to 1075 (KAAS…KPPT), and 1215 to 1300 (SSEG…IKTY). The span at 86-96 (ATGGGGGGSGG) shows a compositional bias: gly residues. Over residues 624–664 (APQAPPAVSTPLPLGLQQPQAQQPPQAPTPQAAAPPQATTP) the composition is skewed to low complexity. Positions 726–736 (APPPAQDPAPA) are enriched in pro residues. The span at 747-780 (PQAPDSQASPAPAPQIPAAAPLKGPGPSSSPSLP) shows a compositional bias: low complexity. Pro residues-rich tracts occupy residues 791 to 806 (LPSP…PPSR), 814 to 831 (PSEP…PPTL), and 843 to 880 (VPPP…PHLP). Residues 881–896 (PSSTSSAVASSSETSS) are compositionally biased toward low complexity. Phosphoserine is present on Ser919. Thr921 bears the Phosphothreonine mark. The segment covering 932-941 (PAAPPPPPPR) has biased composition (pro residues). The span at 1005–1028 (APSGTPTAPSHAPAPAPMAATGLP) shows a compositional bias: low complexity. An N6-acetyllysine modification is found at Lys1057. Over residues 1227–1236 (LSSSAPGAST) the composition is skewed to polar residues. Over residues 1264 to 1281 (ASSSLSSSSSSSSAASSL) the composition is skewed to low complexity. A Glycyl lysine isopeptide (Lys-Gly) (interchain with G-Cter in SUMO2) cross-link involves residue Lys1313. Disordered regions lie at residues 1324–1424 (NTAL…VDEA) and 1440–1560 (YQRM…TLTR). A compositionally biased stretch (pro residues) spans 1331 to 1356 (HQPPPPPATLKVAEPPPRPPPPPPPT). Positions 1401–1412 (PEGTPAGRARGG) are enriched in low complexity. Ser1413 is subject to Phosphoserine. Over residues 1485–1515 (ASFSSDSPQDDTLTEHLQSAIDSILNLQQAP) the composition is skewed to polar residues.

In terms of assembly, component of the multiprotein chromatin-remodeling complexes SWI/SNF: SWI/SNF-A (BAF), SWI/SNF-B (PBAF) and related complexes. The canonical complex contains a catalytic subunit (either SMARCA4/BRG1/BAF190A or SMARCA2/BRM/BAF190B) and at least SMARCE1, ACTL6A/BAF53, SMARCC1/BAF155, SMARCC2/BAF170, and SMARCB1/SNF5/BAF47. Other subunits specific to each of the complexes may also be present permitting several possible combinations developmentally and tissue specific. Component of the SWI/SNF (GBAF) subcomplex, which includes at least BICRA or BICRAL (mutually exclusive), BRD9, SS18, the core BAF subunits, SMARCA2/BRM, SMARCA4/BRG1/BAF190A, ACTL6A/BAF53, SMARCC1/BAF155, and SMARCD1/BAF60A. Interacts with BRD4; the interaction bridges BRD4 to the GBAF complex. In terms of tissue distribution, expressed at moderate levels in heart, brain, placenta, skeletal muscle, and pancreas, and at lower levels in lung, liver and kidney.

Its subcellular location is the nucleus. Functionally, component of SWI/SNF chromatin remodeling subcomplex GBAF that carries out key enzymatic activities, changing chromatin structure by altering DNA-histone contacts within a nucleosome in an ATP-dependent manner. May play a role in BRD4-mediated gene transcription. This is BRD4-interacting chromatin-remodeling complex-associated protein from Homo sapiens (Human).